A 703-amino-acid chain; its full sequence is Elongation factor G (703 aa).

The tr-type G domain occupies 7–287; it reads KFTRNIGIAA…AVMRYLPSPA (281 aa). Residues 16-23, 84-88, and 138-141 each bind GTP; these read AHIDAGKT, DTPGH, and NKMD.

Belongs to the TRAFAC class translation factor GTPase superfamily. Classic translation factor GTPase family. EF-G/EF-2 subfamily.

It localises to the cytoplasm. Functionally, catalyzes the GTP-dependent ribosomal translocation step during translation elongation. During this step, the ribosome changes from the pre-translocational (PRE) to the post-translocational (POST) state as the newly formed A-site-bound peptidyl-tRNA and P-site-bound deacylated tRNA move to the P and E sites, respectively. Catalyzes the coordinated movement of the two tRNA molecules, the mRNA and conformational changes in the ribosome. This is Elongation factor G from Christiangramia forsetii (strain DSM 17595 / CGMCC 1.15422 / KT0803) (Gramella forsetii).